The primary structure comprises 203 residues: UDP-N-acetylglucosamine transferase subunit ALG13 (203 aa).

Belongs to the glycosyltransferase 28 family. As to quaternary structure, heterodimer with ALG14 to form a functional enzyme.

It is found in the endoplasmic reticulum. The enzyme catalyses an N-acetyl-alpha-D-glucosaminyl-diphospho-di-trans,poly-cis-dolichol + UDP-N-acetyl-alpha-D-glucosamine = an N,N'-diacetylchitobiosyl-diphospho-di-trans,poly-cis-dolichol + UDP + H(+). Its function is as follows. Involved in protein N-glycosylation. Essential for the second step of the dolichol-linked oligosaccharide pathway. This is UDP-N-acetylglucosamine transferase subunit ALG13 (ALG13) from Eremothecium gossypii (strain ATCC 10895 / CBS 109.51 / FGSC 9923 / NRRL Y-1056) (Yeast).